Consider the following 389-residue polypeptide: Gibberellin 20 oxidase 2 (389 aa).

A compositionally biased stretch (pro residues) spans 1–17 (MVAEHPTPPQPHQPPPM). Residues 1–23 (MVAEHPTPPQPHQPPPMDSTAGS) are disordered. The Fe2OG dioxygenase domain maps to 224-324 (DSSSIMRCNY…RRSLAFFLCP (101 aa)). 3 residues coordinate Fe cation: His-249, Asp-251, and His-305. Arg-315 is a catalytic residue.

It belongs to the iron/ascorbate-dependent oxidoreductase family. GA20OX subfamily. It depends on Fe cation as a cofactor. L-ascorbate serves as cofactor.

It catalyses the reaction gibberellin A12 + 2 2-oxoglutarate + 3 O2 + H(+) = gibberellin A9 + 2 succinate + 3 CO2 + 2 H2O. The catalysed reaction is gibberellin A53 + 2 2-oxoglutarate + 3 O2 + H(+) = gibberellin A20 + 2 succinate + 3 CO2 + 2 H2O. Key oxidase enzyme in the biosynthesis of gibberellin that catalyzes the conversion of GA53 to GA20 via a three-step oxidation at C-20 of the GA skeleton. The chain is Gibberellin 20 oxidase 2 (20ox2) from Oryza sativa subsp. indica (Rice).